A 366-amino-acid polypeptide reads, in one-letter code: Anthranilate phosphoribosyltransferase (366 aa).

5-phospho-alpha-D-ribose 1-diphosphate-binding positions include glycine 103, 106-107 (GD), threonine 111, 113-116 (NLST), 131-139 (KHGNRASSS), and glycine 143. Anthranilate is bound at residue glycine 103. Serine 115 serves as a coordination point for Mg(2+). Asparagine 134 contacts anthranilate. Arginine 189 provides a ligand contact to anthranilate. Residues aspartate 247 and glutamate 248 each coordinate Mg(2+).

Belongs to the anthranilate phosphoribosyltransferase family. In terms of assembly, homodimer. It depends on Mg(2+) as a cofactor.

It catalyses the reaction N-(5-phospho-beta-D-ribosyl)anthranilate + diphosphate = 5-phospho-alpha-D-ribose 1-diphosphate + anthranilate. Its pathway is amino-acid biosynthesis; L-tryptophan biosynthesis; L-tryptophan from chorismate: step 2/5. Its function is as follows. Catalyzes the transfer of the phosphoribosyl group of 5-phosphorylribose-1-pyrophosphate (PRPP) to anthranilate to yield N-(5'-phosphoribosyl)-anthranilate (PRA). This Mycobacterium leprae (strain Br4923) protein is Anthranilate phosphoribosyltransferase.